The sequence spans 103 residues: MPKAAAKSKTTGKVEKRRAKKDPNAPKRGLSAYMFFANEQRENVREENPGVSFGQVGKILGERWKALSDKQRAPYEAKAAADKKRYEDEKQAYNAEADEEESS.

2 disordered regions span residues 1 to 30 (MPKAAAKSKTTGKVEKRRAKKDPNAPKRGL) and 70 to 103 (KQRAPYEAKAAADKKRYEDEKQAYNAEADEEESS). The segment at residues 26–94 (PKRGLSAYMF…RYEDEKQAYN (69 aa)) is a DNA-binding region (HMG box). The segment covering 70–91 (KQRAPYEAKAAADKKRYEDEKQ) has biased composition (basic and acidic residues).

It belongs to the NHP6 family. Weakly associates with the stable heterodimer of ctc-1/pob3 and ctc-2/spt16 to form the FACT complex.

It is found in the nucleus. Its subcellular location is the chromosome. DNA-binding protein that induces severe bending of DNA. Required for DNA-binding by the FACT complex, a general chromatin factor that acts to reorganize nucleosomes. The FACT complex is involved in multiple processes that require DNA as a template such as mRNA elongation, DNA replication and DNA repair. Also augments the fidelity of transcription by RNA polymerase III independently of any role in the FACT complex. The sequence is that of Non-histone chromosomal protein 6 (nhp-1) from Neurospora crassa (strain ATCC 24698 / 74-OR23-1A / CBS 708.71 / DSM 1257 / FGSC 987).